Reading from the N-terminus, the 859-residue chain is Protein EFR3 homolog (859 aa).

Residues 696–714 show a composition bias toward polar residues; it reads RKNDGSGDQWQNDTPNFDS. Positions 696–728 are disordered; it reads RKNDGSGDQWQNDTPNFDSTDGRESPSGYKTVG.

The protein belongs to the EFR3 family.

The polypeptide is Protein EFR3 homolog (Caenorhabditis elegans).